Reading from the N-terminus, the 321-residue chain is Glucokinase (321 aa).

8–13 (GDVGGT) lines the ATP pocket.

It belongs to the bacterial glucokinase family.

The protein localises to the cytoplasm. The enzyme catalyses D-glucose + ATP = D-glucose 6-phosphate + ADP + H(+). The chain is Glucokinase from Escherichia coli O127:H6 (strain E2348/69 / EPEC).